The primary structure comprises 367 residues: UDP-N-acetylglucosamine--N-acetylmuramyl-(pentapeptide) pyrophosphoryl-undecaprenol N-acetylglucosamine transferase (367 aa).

Residues 15–17 (TGG), Asn127, Arg163, Ser191, Ile249, and Gln294 each bind UDP-N-acetyl-alpha-D-glucosamine.

It belongs to the glycosyltransferase 28 family. MurG subfamily.

The protein localises to the cell inner membrane. The catalysed reaction is di-trans,octa-cis-undecaprenyl diphospho-N-acetyl-alpha-D-muramoyl-L-alanyl-D-glutamyl-meso-2,6-diaminopimeloyl-D-alanyl-D-alanine + UDP-N-acetyl-alpha-D-glucosamine = di-trans,octa-cis-undecaprenyl diphospho-[N-acetyl-alpha-D-glucosaminyl-(1-&gt;4)]-N-acetyl-alpha-D-muramoyl-L-alanyl-D-glutamyl-meso-2,6-diaminopimeloyl-D-alanyl-D-alanine + UDP + H(+). The protein operates within cell wall biogenesis; peptidoglycan biosynthesis. Cell wall formation. Catalyzes the transfer of a GlcNAc subunit on undecaprenyl-pyrophosphoryl-MurNAc-pentapeptide (lipid intermediate I) to form undecaprenyl-pyrophosphoryl-MurNAc-(pentapeptide)GlcNAc (lipid intermediate II). The chain is UDP-N-acetylglucosamine--N-acetylmuramyl-(pentapeptide) pyrophosphoryl-undecaprenol N-acetylglucosamine transferase from Burkholderia pseudomallei (strain 668).